The following is a 180-amino-acid chain: Segregation and condensation protein B (180 aa).

It belongs to the ScpB family. In terms of assembly, homodimer. Homodimerization may be required to stabilize the binding of ScpA to the Smc head domains. Component of a cohesin-like complex composed of ScpA, ScpB and the Smc homodimer, in which ScpA and ScpB bind to the head domain of Smc. The presence of the three proteins is required for the association of the complex with DNA.

It localises to the cytoplasm. Its function is as follows. Participates in chromosomal partition during cell division. May act via the formation of a condensin-like complex containing Smc and ScpA that pull DNA away from mid-cell into both cell halves. The chain is Segregation and condensation protein B from Staphylococcus aureus (strain MSSA476).